A 1144-amino-acid polypeptide reads, in one-letter code: Formin-like protein 18 (1144 aa).

Residues 17 to 193 (LEISERVYVF…QYISRRNVGS (177 aa)) enclose the Phosphatase tensin-type domain. The active-site Phosphocysteine intermediate is Cys126. Residues 199–338 (DQALTLDCVN…FSAEVIFSEM (140 aa)) form the C2 tensin-type domain. 2 disordered regions span residues 429–463 (ISENIVSSPDTSSPEKEKDTMSSHKSYADPNSILK) and 482–729 (KIFS…KGRG). Residues 441 to 450 (SPEKEKDTMS) are compositionally biased toward basic and acidic residues. Positions 491-522 (SPVTSPLPNRSPTQGSPASISRFHSSPSSLGI) are enriched in polar residues. A compositionally biased stretch (basic and acidic residues) spans 526–536 (LHDHGSCKDEE). Low complexity predominate over residues 538–548 (TSSSPASPSIS). The segment covering 555–580 (PLTSSQPKKASPQCPQSPTPVHSNGP) has biased composition (polar residues). Over residues 603-613 (RPPPPPPPPPI) the composition is skewed to pro residues. The span at 614 to 629 (SSLRSTPSPSSTSNSI) shows a compositional bias: low complexity. The span at 633–643 (GPPPPPPPPPL) shows a compositional bias: pro residues. The span at 644–653 (QSHRSALSSS) shows a compositional bias: low complexity. A compositionally biased stretch (pro residues) spans 669–678 (NPPPPPPPPL). The span at 679–695 (HSNSRMGAPTSSLVLKS) shows a compositional bias: low complexity. Residues 696-705 (PPVPPPPAPA) show a composition bias toward pro residues. Residues 735-1135 (KGQGQTRKAN…RAQKEAENEK (401 aa)) form the FH2 domain.

This sequence belongs to the formin-like family. Class-II subfamily.

The chain is Formin-like protein 18 (FH18) from Arabidopsis thaliana (Mouse-ear cress).